Here is a 125-residue protein sequence, read N- to C-terminus: Small ribosomal subunit protein uS12m (125 aa).

Residues Met-1–Arg-50 form a disordered region. A compositionally biased stretch (basic and acidic residues) spans His-10–Ala-23.

Belongs to the universal ribosomal protein uS12 family.

The protein resides in the mitochondrion. Its function is as follows. Protein S12 is involved in the translation initiation step. The sequence is that of Small ribosomal subunit protein uS12m (RPS12) from Petunia hybrida (Petunia).